The sequence spans 252 residues: Geranylgeranylglyceryl phosphate synthase (252 aa).

Mg(2+)-binding residues include aspartate 25 and serine 54. Sn-glycerol 1-phosphate is bound by residues 174–180 (FMDAGSG), 205–206 (GG), and 227–228 (GN).

This sequence belongs to the GGGP/HepGP synthase family. Group II subfamily. In terms of assembly, homohexamer. It depends on Mg(2+) as a cofactor.

The catalysed reaction is sn-glycerol 1-phosphate + (2E,6E,10E)-geranylgeranyl diphosphate = sn-3-O-(geranylgeranyl)glycerol 1-phosphate + diphosphate. Prenyltransferase that catalyzes the transfer of the geranylgeranyl moiety of geranylgeranyl diphosphate (GGPP) to the C3 hydroxyl of sn-glycerol-1-phosphate (G1P). The chain is Geranylgeranylglyceryl phosphate synthase from Chitinophaga pinensis (strain ATCC 43595 / DSM 2588 / LMG 13176 / NBRC 15968 / NCIMB 11800 / UQM 2034).